The following is a 276-amino-acid chain: NAD-capped RNA hydrolase NudC (276 aa).

Substrate is bound at residue Arg82. Zn(2+) is bound by residues Cys112 and Cys115. A substrate-binding site is contributed by Glu125. Zn(2+) contacts are provided by Cys130 and Cys133. A substrate-binding site is contributed by Tyr138. Positions 139 to 262 constitute a Nudix hydrolase domain; sequence PRISPSMIVL…SIARYLIDLY (124 aa). A divalent metal cation contacts are provided by Ala172, Glu188, and Glu192. Positions 173 to 194 match the Nudix box motif; the sequence is GFAEPGESAEDCLVREVREEVA. Residue 206-213 coordinates substrate; it reads QCWPFPHS. Residue Glu233 participates in a divalent metal cation binding. Ala255 provides a ligand contact to substrate.

It belongs to the Nudix hydrolase family. NudC subfamily. Homodimer. Requires Mg(2+) as cofactor. Mn(2+) is required as a cofactor. The cofactor is Zn(2+).

The catalysed reaction is a 5'-end NAD(+)-phospho-ribonucleoside in mRNA + H2O = a 5'-end phospho-adenosine-phospho-ribonucleoside in mRNA + beta-nicotinamide D-ribonucleotide + 2 H(+). The enzyme catalyses NAD(+) + H2O = beta-nicotinamide D-ribonucleotide + AMP + 2 H(+). It carries out the reaction NADH + H2O = reduced beta-nicotinamide D-ribonucleotide + AMP + 2 H(+). MRNA decapping enzyme that specifically removes the nicotinamide adenine dinucleotide (NAD) cap from a subset of mRNAs by hydrolyzing the diphosphate linkage to produce nicotinamide mononucleotide (NMN) and 5' monophosphate mRNA. The NAD-cap is present at the 5'-end of some mRNAs and stabilizes RNA against 5'-processing. Has preference for mRNAs with a 5'-end purine. Catalyzes the hydrolysis of a broad range of dinucleotide pyrophosphates. The protein is NAD-capped RNA hydrolase NudC of Pseudomonas putida (strain ATCC 700007 / DSM 6899 / JCM 31910 / BCRC 17059 / LMG 24140 / F1).